A 219-amino-acid chain; its full sequence is Proteasome subunit beta (219 aa).

Residues 1–14 constitute a propeptide, removed in mature form; by autocatalysis; it reads MISNSEYHKEYMKG. T15 serves as the catalytic Nucleophile.

The protein belongs to the peptidase T1B family. As to quaternary structure, the 20S proteasome core is composed of 14 alpha and 14 beta subunits that assemble into four stacked heptameric rings, resulting in a barrel-shaped structure. The two inner rings, each composed of seven catalytic beta subunits, are sandwiched by two outer rings, each composed of seven alpha subunits. The catalytic chamber with the active sites is on the inside of the barrel. Has a gated structure, the ends of the cylinder being occluded by the N-termini of the alpha-subunits. Is capped at one or both ends by the proteasome regulatory ATPase, PAN.

The protein resides in the cytoplasm. The enzyme catalyses Cleavage of peptide bonds with very broad specificity.. The formation of the proteasomal ATPase PAN-20S proteasome complex, via the docking of the C-termini of PAN into the intersubunit pockets in the alpha-rings, triggers opening of the gate for substrate entry. Interconversion between the open-gate and close-gate conformations leads to a dynamic regulation of the 20S proteasome proteolysis activity. Component of the proteasome core, a large protease complex with broad specificity involved in protein degradation. The sequence is that of Proteasome subunit beta from Methanococcus maripaludis (strain C6 / ATCC BAA-1332).